Here is a 280-residue protein sequence, read N- to C-terminus: Formamidopyrimidine-DNA glycosylase (280 aa).

Pro2 (schiff-base intermediate with DNA) is an active-site residue. Glu3 serves as the catalytic Proton donor. Catalysis depends on Lys58, which acts as the Proton donor; for beta-elimination activity. DNA-binding residues include His91, Arg110, and Arg152. The FPG-type zinc finger occupies 237 to 271; that stretch reads NVYGRENLPCPQCDSAIEKVVLNQRAAYFCSNCQK. The Proton donor; for delta-elimination activity role is filled by Arg261.

It belongs to the FPG family. As to quaternary structure, monomer. It depends on Zn(2+) as a cofactor.

The catalysed reaction is Hydrolysis of DNA containing ring-opened 7-methylguanine residues, releasing 2,6-diamino-4-hydroxy-5-(N-methyl)formamidopyrimidine.. The enzyme catalyses 2'-deoxyribonucleotide-(2'-deoxyribose 5'-phosphate)-2'-deoxyribonucleotide-DNA = a 3'-end 2'-deoxyribonucleotide-(2,3-dehydro-2,3-deoxyribose 5'-phosphate)-DNA + a 5'-end 5'-phospho-2'-deoxyribonucleoside-DNA + H(+). Its function is as follows. Involved in base excision repair of DNA damaged by oxidation or by mutagenic agents. Acts as a DNA glycosylase that recognizes and removes damaged bases. Has a preference for oxidized purines, such as 7,8-dihydro-8-oxoguanine (8-oxoG). Has AP (apurinic/apyrimidinic) lyase activity and introduces nicks in the DNA strand. Cleaves the DNA backbone by beta-delta elimination to generate a single-strand break at the site of the removed base with both 3'- and 5'-phosphates. The protein is Formamidopyrimidine-DNA glycosylase of Hydrogenovibrio crunogenus (strain DSM 25203 / XCL-2) (Thiomicrospira crunogena).